A 571-amino-acid chain; its full sequence is Streptolysin O (571 aa).

The N-terminal stretch at M1–S33 is a signal peptide. Disordered stretches follow at residues E32–E56 and K81–E108. Over residues N37–E48 the composition is skewed to low complexity. The next 4 beta stranded transmembrane spans lie at K260 to I273, I280 to E289, S358 to A367, and K375 to S387. The short motif at E529–R539 is the Conserved undecapeptide element. Residue T561 is a short sequence motif, cholesterol binding.

This sequence belongs to the cholesterol-dependent cytolysin family. Homooligomeric pore complex of 35 to 50 subunits; when inserted in the host membrane.

Its subcellular location is the secreted. The protein resides in the host cell membrane. Functionally, a cholesterol-dependent toxin that causes cytolysis by forming pores in cholesterol containing host membranes. After binding to target membranes, the protein undergoes a major conformation change, leading to its insertion in the host membrane and formation of an oligomeric pore complex. Cholesterol is required for binding to host membranes, membrane insertion and pore formation; cholesterol binding is mediated by a Thr-Leu pair in the C-terminus. Can be reversibly inactivated by oxidation. This chain is Streptolysin O (slo), found in Streptococcus pyogenes serotype M6 (strain ATCC BAA-946 / MGAS10394).